The primary structure comprises 346 residues: uncharacterized protein (346 aa).

Residues 1–27 (MKFNKISLSVSTALLAAGLAVSGSANA) form the signal peptide.

This is an uncharacterized protein from Haemophilus influenzae (strain ATCC 51907 / DSM 11121 / KW20 / Rd).